The following is a 123-amino-acid chain: Hydrogenase maturation factor HypA (123 aa).

His-2 lines the Ni(2+) pocket. 4 residues coordinate Zn(2+): Cys-77, Cys-80, Cys-96, and Cys-99.

Belongs to the HypA/HybF family.

Functionally, involved in the maturation of [NiFe] hydrogenases. Required for nickel insertion into the metal center of the hydrogenase. The sequence is that of Hydrogenase maturation factor HypA from Methanococcus aeolicus (strain ATCC BAA-1280 / DSM 17508 / OCM 812 / Nankai-3).